The chain runs to 469 residues: 3-isopropylmalate dehydratase large subunit (469 aa).

[4Fe-4S] cluster-binding residues include cysteine 350, cysteine 410, and cysteine 413.

Belongs to the aconitase/IPM isomerase family. LeuC type 1 subfamily. Heterodimer of LeuC and LeuD. It depends on [4Fe-4S] cluster as a cofactor.

The enzyme catalyses (2R,3S)-3-isopropylmalate = (2S)-2-isopropylmalate. The protein operates within amino-acid biosynthesis; L-leucine biosynthesis; L-leucine from 3-methyl-2-oxobutanoate: step 2/4. In terms of biological role, catalyzes the isomerization between 2-isopropylmalate and 3-isopropylmalate, via the formation of 2-isopropylmaleate. The protein is 3-isopropylmalate dehydratase large subunit of Rhizobium etli (strain CIAT 652).